The following is a 323-amino-acid chain: MLKSTVNNTRIKCGHIDQRRNYLFTTLAGTVLGSFLWSKNNVLASKMENGELHYHDPNLKFNKKLFNGKPPFERRTPDYPGHVPLYNFEKVLMFLGSSMGAFFHPEENKYIVALGESTAITPILQNLRHKMLSDPVGRTILREKPRMTSDSLNLTYLRSLPDNTIGKNYVNWLDKEHVSPDTRVAVRYIDNEELAYIYQRYRECHDFYHAITGLPIIIEGEIAVKVFEFANIGIPMSGLGALFAPLRLKSSQRQRLREIYYPWAIKNGLFSKPLINVYWEKILEKDVDEFRQEMGIQQPPDLRNMRKEYFAKKKLEKQLQGGK.

The Zn(2+) site is built by histidine 205, aspartate 206, histidine 209, and glutamate 221.

Belongs to the COQ4 family. Component of a multi-subunit COQ enzyme complex, composed of at least COQ3, COQ4, COQ5, COQ6, COQ7 and COQ9. Zn(2+) is required as a cofactor.

It is found in the mitochondrion inner membrane. The enzyme catalyses a 4-hydroxy-3-methoxy-5-(all-trans-polyprenyl)benzoate + H(+) = a 2-methoxy-6-(all-trans-polyprenyl)phenol + CO2. It participates in cofactor biosynthesis; ubiquinone biosynthesis. Its function is as follows. Lyase that catalyzes the C1-decarboxylation of 4-hydroxy-3-methoxy-5-(all-trans-polyprenyl)benzoic acid into 2-methoxy-6-(all-trans-polyprenyl)phenol during ubiquinone biosynthesis. The protein is Ubiquinone biosynthesis protein COQ4, mitochondrial of Candida albicans (strain SC5314 / ATCC MYA-2876) (Yeast).